A 518-amino-acid polypeptide reads, in one-letter code: Circadian clock oscillator protein KaiC (518 aa).

One can recognise a KaiC 1 domain in the interval 1–247 (MTNLPEHQSS…FTINNGINIF (247 aa)). ATP-binding residues include Ser49, Gly50, Thr51, Gly52, Lys53, Thr54, and Leu55. Thr54 contacts Mg(2+). Catalysis depends on Glu78, which acts as the Proton acceptor in CI (KaiC 1). An ATP-binding site is contributed by Ser90. The segment at 116-123 (QEVAGDFD) is B-loop, required to bind KaiB and SasA. ATP is bound by residues Lys225, Leu226, Arg227, Thr229, and His231. The segment at 248-260 (PLGAMRLTQRSSN) is linker. A KaiC 2 domain is found at 261 to 518 (VRVSSGVKTL…AKGMQDLESE (258 aa)). 7 residues coordinate ATP: Thr290, Gly291, Thr292, Gly293, Lys294, Thr295, and Leu296. Mg(2+) is bound at residue Thr295. Glu318 provides a ligand contact to Mg(2+). Glu318 (proton acceptor in CII (KaiC 2)) is an active-site residue. Residue Trp331 coordinates ATP. Position 431 is a phosphoserine; by autocatalysis (Ser431). Thr432 bears the Phosphothreonine; by autocatalysis mark. Residues Arg451, Lys457, Met458, Arg459, Ser461, His463, and Lys465 each contribute to the ATP site. The tract at residues 488–497 (GIISGTPTRI) is A-loop, interacts with KaiA.

It belongs to the KaiC family. In terms of assembly, homohexamer resembling 2 stacked donuts rings with a central pore nearly blocked on one side; hexamerization is dependent on ATP-binding. Binds 2 ATP per monomer, at the subunit interface on each ring. The KaiABC complex composition changes during the circadian cycle to control KaiC phosphorylation. Complexes KaiC(6), KaiA(2-4):KaiC(6), KaiB(6):KaiC(6) and KaiC(6):KaiB(6):KaiA(12) are among the most important forms, many form cooperatively. Interacts with SasA, probably as 1 SasA trimer:1 KaiC homohexamer, has highest affinity for unphosphorylated SasA. The CI domain binds to KaiB and SasA; as they have a similar fold they compete for the same site on CI. KaiB assumes a thioredoxin-like form called KaiB(fs) when bound to KaiC. The cofactor is Mg(2+). In terms of processing, phosphorylated on serine/threonine residues by autocatalysis. Both phosphorylated and unphosphorylated forms exist. Both autophosphorylates and autodephosphorylates. Phosphorylated form correlates with clock speed. Phosphorylated on serine and threonine residues by autocatalysis. Has a 4 step phosphorylation cycle; the autokinase acts first on Thr-432, then Ser-431. When Ser-431 is modified KaiC switches to an autophosphatase mode, acting first on phospho-Thr-432 then phospho-Ser-431.

It carries out the reaction L-seryl-[protein] + ATP = O-phospho-L-seryl-[protein] + ADP + H(+). The catalysed reaction is L-threonyl-[protein] + ATP = O-phospho-L-threonyl-[protein] + ADP + H(+). It catalyses the reaction ATP + H2O = ADP + phosphate + H(+). Its activity is regulated as follows. The interaction with KaiA enhances its phosphorylation status, while the interaction with KaiB decreases it. Its function is as follows. Central component of the KaiABC oscillator complex, which constitutes the main circadian regulator in cyanobacteria. Complex composition changes during the circadian cycle to control KaiC phosphorylation. KaiA stimulates KaiC autophosphorylation, while KaiB sequesters KaiA, leading to KaiC autodephosphorylation. Clock output pathways impact the RpaA transcriptional regulator. KaiC enhances the autophosphorylation activity of SasA, which then transfers its phosphate group to RpaA to activate it. KaiB and KaiC together enhance the phospho-RpaA dephosphatase activity of CikA. In terms of biological role, stimulates SasA autophosphorylation. Fully phosphorylated KaiC (tested with phosphomimetic Asp-431-432-Asp) is the best stimulant, requires the ATPase activity of the CII domain. Unphosphorylated SasA associates with KaiC and its autophosphorylation activity is enhanced. Phospho-SasA is released and associates with RpaA, transferring its phosphate group. Formation of the KaiA:KaiB complex is promoted by KaiC, helping switch KaiC from its autophosphorylation to autodephosphatase function. Functionally, has a weak, temperature-independent ATPase activity (about 14 molecules of ATP per day) that defines the circadian period. ATPase activity is mostly contributed by the CI domain; the CII domain augments the activity. The addition of KaiA increases activity. ATPase is inhibited during the KaiC phosphorylating phase and activated during the KaiC dephosphorylating phase. The protein is Circadian clock oscillator protein KaiC of Thermosynechococcus vestitus (strain NIES-2133 / IAM M-273 / BP-1).